Reading from the N-terminus, the 559-residue chain is Formate--tetrahydrofolate ligase (559 aa).

Residue 68–75 participates in ATP binding; that stretch reads TPAGEGKT.

This sequence belongs to the formate--tetrahydrofolate ligase family.

The catalysed reaction is (6S)-5,6,7,8-tetrahydrofolate + formate + ATP = (6R)-10-formyltetrahydrofolate + ADP + phosphate. It functions in the pathway one-carbon metabolism; tetrahydrofolate interconversion. This Rhizobium johnstonii (strain DSM 114642 / LMG 32736 / 3841) (Rhizobium leguminosarum bv. viciae) protein is Formate--tetrahydrofolate ligase.